The chain runs to 237 residues: Probable GTP-binding protein EngB (237 aa).

An EngB-type G domain is found at 13–188 (TGYEIAFAGR…ASVMAGRLNY (176 aa)). GTP contacts are provided by residues 21–28 (GRSNAGKS), 48–52 (GRTQM), 67–70 (DLPG), 134–137 (TKAD), and 167–169 (FSS). 2 residues coordinate Mg(2+): S28 and T50. Positions 207-220 (DDLNDELMDQDETS) are enriched in acidic residues. Positions 207-237 (DDLNDELMDQDETSEFNTENIDDHLDQEPKI) are disordered. The span at 227–237 (IDDHLDQEPKI) shows a compositional bias: basic and acidic residues.

This sequence belongs to the TRAFAC class TrmE-Era-EngA-EngB-Septin-like GTPase superfamily. EngB GTPase family. Mg(2+) serves as cofactor.

Its function is as follows. Necessary for normal cell division and for the maintenance of normal septation. This Acinetobacter baylyi (strain ATCC 33305 / BD413 / ADP1) protein is Probable GTP-binding protein EngB.